A 394-amino-acid polypeptide reads, in one-letter code: V-type proton ATPase subunit C (394 aa).

Phosphoserine is present on serine 17.

The protein belongs to the V-ATPase C subunit family. As to quaternary structure, V-ATPase is a heteromultimeric enzyme composed of a peripheral catalytic V1 complex (components A to H) attached to an integral membrane V0 proton pore complex (components: a, c, c', c'', d, e, f and VOA1).

It localises to the cytoplasm. The protein localises to the vacuole membrane. Its function is as follows. Subunit of the V1 complex of vacuolar(H+)-ATPase (V-ATPase), a multisubunit enzyme composed of a peripheral complex (V1) that hydrolyzes ATP and a membrane integral complex (V0) that translocates protons. V-ATPase is responsible for acidifying and maintaining the pH of intracellular compartments. Subunit C is necessary for the assembly of the catalytic sector of the enzyme and is likely to have a specific function in its catalytic activity. Reversibly leaves the enzyme after glucose depletion, causing the catalytic subcomplex V1 to detach from the V0 section. This Schizosaccharomyces pombe (strain 972 / ATCC 24843) (Fission yeast) protein is V-type proton ATPase subunit C.